The chain runs to 362 residues: Chorismate synthase (362 aa).

Residue arginine 48 participates in NADP(+) binding. Residues 131 to 133 (RAS), 243 to 244 (NA), glycine 288, 303 to 307 (KPTSS), and arginine 329 each bind FMN.

The protein belongs to the chorismate synthase family. As to quaternary structure, homotetramer. The cofactor is FMNH2.

It catalyses the reaction 5-O-(1-carboxyvinyl)-3-phosphoshikimate = chorismate + phosphate. The protein operates within metabolic intermediate biosynthesis; chorismate biosynthesis; chorismate from D-erythrose 4-phosphate and phosphoenolpyruvate: step 7/7. Catalyzes the anti-1,4-elimination of the C-3 phosphate and the C-6 proR hydrogen from 5-enolpyruvylshikimate-3-phosphate (EPSP) to yield chorismate, which is the branch point compound that serves as the starting substrate for the three terminal pathways of aromatic amino acid biosynthesis. This reaction introduces a second double bond into the aromatic ring system. This Bartonella tribocorum (strain CIP 105476 / IBS 506) protein is Chorismate synthase.